The chain runs to 621 residues: Uptake hydrogenase large subunit (621 aa).

Ni(2+) is bound by residues C75, C78, C600, and C603.

The protein belongs to the [NiFe]/[NiFeSe] hydrogenase large subunit family. As to quaternary structure, heterodimer of a large and a small subunit. Requires Ni(2+) as cofactor.

The protein localises to the cell membrane. The enzyme catalyses H2 + A = AH2. Its function is as follows. This enzyme recycles the H(2) produced by nitrogenase to increase the production of ATP and to protect nitrogenase against inhibition or damage by O(2) under carbon- or phosphate-limited conditions. The polypeptide is Uptake hydrogenase large subunit (hupL) (Alcaligenes hydrogenophilus).